The following is a 46-amino-acid chain: Hellethionin-D (46 aa).

Disulfide bonds link C3-C40, C4-C32, C12-C30, and C16-C26.

This sequence belongs to the plant thionin (TC 1.C.44) family. 4 C-C subfamily.

The protein resides in the secreted. Functionally, thionins are small plant proteins which are toxic to animal cells. They seem to exert their toxic effect at the level of the cell membrane. Their precise function is not known. The sequence is that of Hellethionin-D from Helleborus purpurascens (Purple hellebore).